A 349-amino-acid chain; its full sequence is Guanine nucleotide-binding protein-like alpha-10 subunit (349 aa).

Residues 33 to 349 (EEIRVLIYGQ…LNITYNSVKN (317 aa)) enclose the G-alpha domain. The G1 motif stretch occupies residues 36–49 (RVLIYGQKKVGVTT). The interval 168–176 (DLNFIKLTQ) is G2 motif. A G3 motif region spans residues 191 to 200 (IKMIEMGIQT). GTP-binding positions include 195 to 199 (EMGIQ) and 266 to 269 (NKKD). Residues 262–269 (IVFFNKKD) form a G4 motif region. The interval 320 to 325 (NEESEV) is G5 motif.

It belongs to the G-alpha family.

The sequence is that of Guanine nucleotide-binding protein-like alpha-10 subunit (gpaJ) from Dictyostelium discoideum (Social amoeba).